A 416-amino-acid polypeptide reads, in one-letter code: MLCPVSHLADLRQQVPFDLALLPPQACLVGGAVRDALLGRRREYLDWDFVVPSGAIETASAIASRYRAGFVVLDKARHIARVVFAHGTVDFAQQEGMSLEQDLARRDFTVNAIAYNFQQNKLIDPMAGVGDLQRGQLKMVAAVNLADDPLRLLRAYRQAAQLQFTLDPDTRTVLRELAPRIKTVAAERVQAEFNYLLGSPRGSQWLLAAWQDGILAHWFSHANLSSLNAIGCIDLAIAAIKNQLTLVERQQFFQALGKKGIAIAKLASLVCADVKIAEGELQRLKYSRHELRSVQAILQGYPQLSCLENSPTVRQLYFFFVELGKYLPHFVLYALAHCPHNYHSFIFELLTHYLNSGDRLAHPQPLITGKDLIDKLHIKPSPLIGQLLTEINIAHIEGKISNEQEALAYAQELGKS.

31-34 (GAVR) is a binding site for CTP. Residues Asp-46 and Asp-48 each contribute to the Mg(2+) site. CTP-binding positions include 106-107 (RD), Asn-111, 148-157 (DPLRLLRAYR), and Arg-188.

Belongs to the tRNA nucleotidyltransferase/poly(A) polymerase family. It depends on Mg(2+) as a cofactor.

The catalysed reaction is a tRNA precursor + 2 CTP = a tRNA with a 3' CC end + 2 diphosphate. TRNA nucleotidyltransferase involved in the synthesis of the tRNA CCA terminus. Adds the two cytidine residues to tRNA. The polypeptide is CC-adding tRNA nucleotidyltransferase (Synechocystis sp. (strain ATCC 27184 / PCC 6803 / Kazusa)).